A 557-amino-acid chain; its full sequence is Carotenoid-cleaving dioxygenase, mitochondrial (557 aa).

Fe cation-binding residues include histidine 203, histidine 263, histidine 334, and histidine 551.

The protein belongs to the carotenoid oxygenase family. The cofactor is Fe(2+).

It localises to the mitochondrion. The enzyme catalyses all-trans-beta-carotene + O2 = beta-ionone + all-trans-10'-apo-beta-carotenal. It carries out the reaction 5-cis-lycopene + O2 = 5-cis-10'-apo-lycopenal + (3E,5E)-6,10-dimethylundeca-3,5,9-trien-2-one. It catalyses the reaction 13-cis-lycopene + O2 = 13-cis-10'-apo-lycopenal + (3E,5E)-6,10-dimethylundeca-3,5,9-trien-2-one. The catalysed reaction is lutein + O2 = (3R,6R)-hydroxy-alpha-ionone + (3R)-3-hydroxy-10'-apo-beta-carotenal. The enzyme catalyses lutein + O2 = (3R,6R)-3-hydroxy-10'-apo-alpha-carotenal + (3R)-hydroxy-beta-ionone. It carries out the reaction all-trans-zeaxanthin + 2 O2 = 4,9-dimethyldodeca-2,4,6,8,10-pentaenedial + 2 (3R)-hydroxy-beta-ionone. It catalyses the reaction all-trans-zeaxanthin + O2 = (3R)-3-hydroxy-10'-apo-beta-carotenal + (3R)-hydroxy-beta-ionone. The catalysed reaction is beta-cryptoxanthin + O2 = all-trans-10'-apo-beta-carotenal + (3R)-hydroxy-beta-ionone. The enzyme catalyses all-trans-10'-apo-beta-carotenal + O2 = beta-ionone + 4,9-dimethyldodeca-2,4,6,8,10-pentaenedial. It carries out the reaction (3R)-3-hydroxy-10'-apo-beta-carotenal + O2 = 4,9-dimethyldodeca-2,4,6,8,10-pentaenedial + (3R)-hydroxy-beta-ionone. It catalyses the reaction (3R,6R)-3-hydroxy-10'-apo-alpha-carotenal + O2 = (3R,6R)-hydroxy-alpha-ionone + 4,9-dimethyldodeca-2,4,6,8,10-pentaenedial. Its function is as follows. Broad specificity mitochondrial dioxygenase that mediates the asymmetric oxidative cleavage of carotenoids. Cleaves carotenes (pure hydrocarbon carotenoids) such as all-trans-beta-carotene and lycopene as well as xanthophylls (oxygenated carotenoids) such as zeaxanthin, lutein and beta-cryptoxanthin at both the 9,10 and the 9',10' carbon-carbon double bond. Through its function in carotenoids metabolism regulates oxidative stress and the production of important signaling molecules. This Pongo abelii (Sumatran orangutan) protein is Carotenoid-cleaving dioxygenase, mitochondrial.